The chain runs to 196 residues: Probable GTP-binding protein EngB (196 aa).

Residues 22–195 (NIPEIALVGR…WQWIEERMGK (174 aa)) form the EngB-type G domain. Residues 30–37 (GRSNVGKS), 57–61 (GKTQT), 75–78 (DVPG), 142–145 (TKID), and 174–176 (FSA) contribute to the GTP site. Serine 37 and threonine 59 together coordinate Mg(2+).

This sequence belongs to the TRAFAC class TrmE-Era-EngA-EngB-Septin-like GTPase superfamily. EngB GTPase family. Mg(2+) is required as a cofactor.

Functionally, necessary for normal cell division and for the maintenance of normal septation. This Limosilactobacillus reuteri (strain DSM 20016) (Lactobacillus reuteri) protein is Probable GTP-binding protein EngB.